A 2185-amino-acid chain; its full sequence is Genome polyprotein (2185 aa).

Gly2 is lipidated: N-myristoyl glycine; by host. Residues 2–1495 (GAQVSTQKTG…HVSRAFICLQ (1494 aa)) lie on the Cytoplasmic side of the membrane. The interval 566 to 582 (FYQGPPGEAVERAIARV) is amphipathic alpha-helix. Active-site for protease 2A activity residues include His872 and Asp890. The Zn(2+) site is built by Cys907 and Cys909. Cys961 functions as the For protease 2A activity in the catalytic mechanism. Zn(2+) is bound by residues Cys967 and His969. The tract at residues 1101–1173 (NNNWLKKFTE…EQSAPSQSDQ (73 aa)) is membrane-binding. Positions 1101–1239 (NNNWLKKFTE…SPGAGKSVAT (139 aa)) are oligomerization. The RNA-binding stretch occupies residues 1122-1126 (AVKIQ). The 157-residue stretch at 1205 to 1361 (EKKMSNYIQF…SMYSQNGKIN (157 aa)) folds into the SF3 helicase domain. Residues Cys1369, Cys1381, and Cys1386 each contribute to the Zn(2+) site. A C4-type; degenerate zinc finger spans residues 1369–1386 (CDEECCPVNFKRCCPLVC). Positions 1413–1420 (EYNHRHSV) are RNA-binding. The oligomerization stretch occupies residues 1424-1429 (LEALFQ). Residues 1496-1511 (ALTTFVSVAGIIYIIY) lie within the membrane without spanning it. Topologically, residues 1512–2185 (KLFAGFQGAY…TLRRKWLDSF (674 aa)) are cytoplasmic. Tyr1521 is subject to O-(5'-phospho-RNA)-tyrosine. The Peptidase C3 domain occupies 1541 to 1719 (GPAFEFAVAM…FSAALLKHYF (179 aa)). Active-site for protease 3C activity residues include His1580, Glu1611, and Cys1687. The region spanning 1950-2066 (GHLIAFDYSG…SYPWPIDASL (117 aa)) is the RdRp catalytic domain. Residues Asp1956 and Asp2052 each coordinate Mg(2+).

The protein belongs to the picornaviruses polyprotein family. In terms of assembly, interacts with capsid protein VP1 and capsid protein VP3 to form heterotrimeric protomers. Interacts with capsid protein VP0, and capsid protein VP3 to form heterotrimeric protomers. Five protomers subsequently associate to form pentamers which serve as building blocks for the capsid. Interacts with capsid protein VP2, capsid protein VP3 and capsid protein VP4 following cleavage of capsid protein VP0. As to quaternary structure, interacts with capsid protein VP1 and capsid protein VP3 in the mature capsid. In terms of assembly, interacts with capsid protein VP0 and capsid protein VP1 to form heterotrimeric protomers. Five protomers subsequently associate to form pentamers which serve as building blocks for the capsid. Interacts with capsid protein VP4 in the mature capsid. Interacts with protein 2C; this interaction may be important for virion morphogenesis. Interacts with capsid protein VP1 and capsid protein VP3. As to quaternary structure, homodimer. In terms of assembly, homohexamer; forms a hexameric ring structure with 6-fold symmetry characteristic of AAA+ ATPases. Interacts (via N-terminus) with host RTN3 (via reticulon domain); this interaction is important for viral replication. Interacts with capsid protein VP3; this interaction may be important for virion morphogenesis. Interacts with protein 3CD. As to quaternary structure, homodimer. Interacts with host GBF1. Interacts (via GOLD domain) with host ACBD3 (via GOLD domain); this interaction allows the formation of a viral protein 3A/ACBD3 heterotetramer with a 2:2 stoichiometry, which will stimulate the recruitment of host PI4KB in order to synthesize PI4P at the viral RNA replication sites. In terms of assembly, interacts with RNA-directed RNA polymerase. Interacts with protein 3AB and with RNA-directed RNA polymerase. As to quaternary structure, interacts with Viral protein genome-linked and with protein 3CD. Mg(2+) serves as cofactor. Post-translationally, specific enzymatic cleavages in vivo by the viral proteases yield processing intermediates and the mature proteins. Myristoylation is required for the formation of pentamers during virus assembly. Further assembly of 12 pentamers and a molecule of genomic RNA generates the provirion. In terms of processing, during virion maturation, immature virions are rendered infectious following cleavage of VP0 into VP4 and VP2. This maturation seems to be an autocatalytic event triggered by the presence of RNA in the capsid and it is followed by a conformational change infectious virion. Post-translationally, myristoylation is required during RNA encapsidation and formation of the mature virus particle. VPg is uridylylated by the polymerase into VPg-pUpU. This acts as a nucleotide-peptide primer for the genomic RNA replication.

The protein resides in the virion. It localises to the host cytoplasm. It is found in the host cytoplasmic vesicle membrane. Its subcellular location is the host nucleus. It catalyses the reaction a ribonucleoside 5'-triphosphate + H2O = a ribonucleoside 5'-diphosphate + phosphate + H(+). It carries out the reaction Selective cleavage of Tyr-|-Gly bond in the picornavirus polyprotein.. The catalysed reaction is RNA(n) + a ribonucleoside 5'-triphosphate = RNA(n+1) + diphosphate. The enzyme catalyses Selective cleavage of Gln-|-Gly bond in the poliovirus polyprotein. In other picornavirus reactions Glu may be substituted for Gln, and Ser or Thr for Gly.. Replication or transcription is subject to high level of random mutations by the nucleotide analog ribavirin. Functionally, forms an icosahedral capsid of pseudo T=3 symmetry with capsid proteins VP2 and VP3. The capsid is 300 Angstroms in diameter, composed of 60 copies of each capsid protein and enclosing the viral positive strand RNA genome. Capsid protein VP1 mainly forms the vertices of the capsid. Capsid protein VP1 interacts with host cell receptor to provide virion attachment to target host cells. This attachment induces virion internalization. Tyrosine kinases are probably involved in the entry process. After binding to its receptor, the capsid undergoes conformational changes. Capsid protein VP1 N-terminus (that contains an amphipathic alpha-helix) and capsid protein VP4 are externalized. Together, they shape a pore in the host membrane through which viral genome is translocated to host cell cytoplasm. Its function is as follows. Forms an icosahedral capsid of pseudo T=3 symmetry with capsid proteins VP2 and VP3. The capsid is 300 Angstroms in diameter, composed of 60 copies of each capsid protein and enclosing the viral positive strand RNA genome. Lies on the inner surface of the capsid shell. After binding to the host receptor, the capsid undergoes conformational changes. Capsid protein VP4 is released, Capsid protein VP1 N-terminus is externalized, and together, they shape a pore in the host membrane through which the viral genome is translocated into the host cell cytoplasm. In terms of biological role, component of immature procapsids, which is cleaved into capsid proteins VP4 and VP2 after maturation. Allows the capsid to remain inactive before the maturation step. Functionally, cysteine protease that cleaves viral polyprotein and specific host proteins. It is responsible for the autocatalytic cleavage between the P1 and P2 regions, which is the first cleavage occurring in the polyprotein. Also cleaves the host translation initiation factor EIF4G1, in order to shut down the capped cellular mRNA translation. Inhibits the host nucleus-cytoplasm protein and RNA trafficking by cleaving host members of the nuclear pores. Counteracts stress granule formation probably by antagonizing its assembly or promoting its dissassembly. Cleaves and inhibits host IFIH1/MDA5, thereby inhibiting the type-I IFN production and the establishment of the antiviral state. Cleaves and inhibits host MAVS, thereby inhibiting the type-I IFN production and the establishment of the antiviral state. Its function is as follows. Plays an essential role in the virus replication cycle by acting as a viroporin. Creates a pore in the host endoplasmic reticulum and as a consequence releases Ca2+ in the cytoplasm of infected cell. In turn, high levels of cytoplasmic calcium may trigger membrane trafficking and transport of viral ER-associated proteins to viroplasms, sites of viral genome replication. Induces and associates with structural rearrangements of intracellular membranes. Displays RNA-binding, nucleotide binding and NTPase activities. May play a role in virion morphogenesis and viral RNA encapsidation by interacting with the capsid protein VP3. In terms of biological role, localizes the viral replication complex to the surface of membranous vesicles. Together with protein 3CD binds the Cis-Active RNA Element (CRE) which is involved in RNA synthesis initiation. Acts as a cofactor to stimulate the activity of 3D polymerase, maybe through a nucleid acid chaperone activity. Functionally, localizes the viral replication complex to the surface of membranous vesicles. It inhibits host cell endoplasmic reticulum-to-Golgi apparatus transport and causes the disassembly of the Golgi complex, possibly through GBF1 interaction. This would result in depletion of MHC, trail receptors and IFN receptors at the host cell surface. Plays an essential role in viral RNA replication by recruiting ACBD3 and PI4KB at the viral replication sites, thereby allowing the formation of the rearranged membranous structures where viral replication takes place. Its function is as follows. Acts as a primer for viral RNA replication and remains covalently bound to viral genomic RNA. VPg is uridylylated prior to priming replication into VPg-pUpU. The oriI viral genomic sequence may act as a template for this. The VPg-pUpU is then used as primer on the genomic RNA poly(A) by the RNA-dependent RNA polymerase to replicate the viral genome. During genome replication, the VPg-RNA linkage is removed by the host TDP2, thereby accelerating replication. During the late stage of the replication cycle, host TDP2 is excluded from sites of viral RNA synthesis and encapsidation, allowing for the generation of progeny virions. Involved in the viral replication complex and viral polypeptide maturation. It exhibits protease activity with a specificity and catalytic efficiency that is different from protease 3C. Protein 3CD lacks polymerase activity. Protein 3CD binds to the 5'UTR of the viral genome. In terms of biological role, replicates the viral genomic RNA on the surface of intracellular membranes. May form linear arrays of subunits that propagate along a strong head-to-tail interaction called interface-I. Covalently attaches UMP to a tyrosine of VPg, which is used to prime RNA synthesis. The positive stranded RNA genome is first replicated at virus induced membranous vesicles, creating a dsRNA genomic replication form. This dsRNA is then used as template to synthesize positive stranded RNA genomes. ss(+)RNA genomes are either translated, replicated or encapsidated. Functionally, major viral protease that mediates proteolytic processing of the polyprotein. Cleaves host EIF5B, contributing to host translation shutoff. Also cleaves host PABPC1, contributing to host translation shutoff. Cleaves host NLRP1, triggers host N-glycine-mediated degradation of the autoinhibitory NLRP1 N-terminal fragment. The polypeptide is Genome polyprotein (Homo sapiens (Human)).